A 358-amino-acid chain; its full sequence is NADH-quinone oxidoreductase subunit H (358 aa).

The next 8 membrane-spanning stretches (helical) occupy residues 30 to 50 (IVIGVCIMLAYAVIAIIMIFM), 96 to 116 (FLYNLAPYIVILASIMAFSCL), 129 to 149 (VGIFFLLAASSIGVVGILLAG), 165 to 185 (GAQMISYELSVGLSILTIVIL), 201 to 221 (GWFLFKGHIPALIAFIIYLIA), 264 to 284 (LFIIAAVATTIFLGGWMPLHI), 297 to 317 (IPGFIWFFGKSFFVVWLLMWI), and 336 to 356 (YLVPIGLCNLLLMVIIVVFKL).

It belongs to the complex I subunit 1 family. As to quaternary structure, NDH-1 is composed of 14 different subunits. Subunits NuoA, H, J, K, L, M, N constitute the membrane sector of the complex.

The protein localises to the cell inner membrane. It catalyses the reaction a quinone + NADH + 5 H(+)(in) = a quinol + NAD(+) + 4 H(+)(out). NDH-1 shuttles electrons from NADH, via FMN and iron-sulfur (Fe-S) centers, to quinones in the respiratory chain. The immediate electron acceptor for the enzyme in this species is believed to be ubiquinone. Couples the redox reaction to proton translocation (for every two electrons transferred, four hydrogen ions are translocated across the cytoplasmic membrane), and thus conserves the redox energy in a proton gradient. This subunit may bind ubiquinone. The chain is NADH-quinone oxidoreductase subunit H from Phocaeicola vulgatus (strain ATCC 8482 / DSM 1447 / JCM 5826 / CCUG 4940 / NBRC 14291 / NCTC 11154) (Bacteroides vulgatus).